We begin with the raw amino-acid sequence, 28 residues long: Potassium channel toxin alpha-KTx 9.3 (28 aa).

3 cysteine pairs are disulfide-bonded: Cys-3/Cys-19, Cys-6/Cys-24, and Cys-10/Cys-26.

Belongs to the short scorpion toxin superfamily. Potassium channel inhibitor family. Alpha-KTx 09 subfamily. In terms of tissue distribution, expressed by the venom gland.

It localises to the secreted. Functionally, inhibits voltage-gated potassium channels. This Aegaeobuthus nigrocinctus (Scorpion) protein is Potassium channel toxin alpha-KTx 9.3.